The primary structure comprises 274 residues: Protein RecA (274 aa).

ATP is bound at residue 43-50 (GPESSGKT).

Belongs to the RecA family.

Its subcellular location is the cytoplasm. Can catalyze the hydrolysis of ATP in the presence of single-stranded DNA, the ATP-dependent uptake of single-stranded DNA by duplex DNA, and the ATP-dependent hybridization of homologous single-stranded DNAs. It interacts with LexA causing its activation and leading to its autocatalytic cleavage. The chain is Protein RecA from Neisseria polysaccharea.